The chain runs to 286 residues: Cytosolic 5'-nucleotidase 3 (286 aa).

The active-site Nucleophile is the Asp-38. Residues Asp-38 and Asp-40 each contribute to the Mg(2+) site. Catalysis depends on Asp-40, which acts as the Proton donor. Substrate is bound by residues Glu-85, Ser-106, Ser-153–Ala-154, and Lys-202. Mg(2+) is bound at residue Asp-227.

The protein belongs to the pyrimidine 5'-nucleotidase family.

Its subcellular location is the cytoplasm. The catalysed reaction is a ribonucleoside 5'-phosphate + H2O = a ribonucleoside + phosphate. Functionally, can act both as nucleotidase and as phosphotransferase. This is Cytosolic 5'-nucleotidase 3 (nt5c3) from Danio rerio (Zebrafish).